The chain runs to 621 residues: Chaperone protein HscA homolog (621 aa).

The protein belongs to the heat shock protein 70 family.

In terms of biological role, chaperone involved in the maturation of iron-sulfur cluster-containing proteins. Has a low intrinsic ATPase activity which is markedly stimulated by HscB. In Polynucleobacter necessarius subsp. necessarius (strain STIR1), this protein is Chaperone protein HscA homolog.